The sequence spans 510 residues: Cytochrome P450 monooxygenase btcC (510 aa).

Residues 1–21 (MSFPGVIFVVSFFPLLMGIAV) traverse the membrane as a helical segment. Cys446 serves as a coordination point for heme.

This sequence belongs to the cytochrome P450 family. The cofactor is heme.

The protein localises to the membrane. It participates in secondary metabolite biosynthesis; terpenoid biosynthesis. Its function is as follows. Cytochrome P450 monooxygenase; part of the gene cluster that mediates the biosynthesis of betaestacins. The bifunctional terpene synthase btcA converts isopentenyl diphosphate (IPP) and dimethylallyl diphosphate (DMAPP) into the sesterterpene betaestacin I. The C-terminal prenyltransferase (PT) domain of btcA catalyzes formation of GFPP, whereas the N-terminal terpene cyclase (TC) domain catalyzes the cyclization of GFPP into betaestacin I. The cytochrome P450 monooxygenase btcB is then responsible for the six-step oxidation of betaestacin I to yield betaestacin II. The roles of the cytochrome P450 monooxygenase btcC and the alpha-ketoglutarate-dependent dioxygenase btcD have not been identified yet. This is Cytochrome P450 monooxygenase btcC from Neocamarosporium betae (Beet black rot fungus).